Consider the following 159-residue polypeptide: Ribosome maturation factor RimP (159 aa).

The protein belongs to the RimP family.

The protein resides in the cytoplasm. Its function is as follows. Required for maturation of 30S ribosomal subunits. The protein is Ribosome maturation factor RimP of Geotalea uraniireducens (strain Rf4) (Geobacter uraniireducens).